We begin with the raw amino-acid sequence, 312 residues long: Glycerol-3-phosphate dehydrogenase [NAD(P)+] (312 aa).

Residues Trp11, Arg30, Arg31, and Lys95 each coordinate NADPH. The sn-glycerol 3-phosphate site is built by Lys95, Gly123, and Ser125. Residue Ala127 coordinates NADPH. Residues Lys177, Asp230, Ser240, Arg241, and Asn242 each coordinate sn-glycerol 3-phosphate. Lys177 serves as the catalytic Proton acceptor. An NADPH-binding site is contributed by Arg241. NADPH-binding residues include Val265 and Glu267.

It belongs to the NAD-dependent glycerol-3-phosphate dehydrogenase family.

It localises to the cytoplasm. It catalyses the reaction sn-glycerol 3-phosphate + NAD(+) = dihydroxyacetone phosphate + NADH + H(+). The catalysed reaction is sn-glycerol 3-phosphate + NADP(+) = dihydroxyacetone phosphate + NADPH + H(+). It functions in the pathway membrane lipid metabolism; glycerophospholipid metabolism. Its function is as follows. Catalyzes the reduction of the glycolytic intermediate dihydroxyacetone phosphate (DHAP) to sn-glycerol 3-phosphate (G3P), the key precursor for phospholipid synthesis. In Helicobacter pylori (strain HPAG1), this protein is Glycerol-3-phosphate dehydrogenase [NAD(P)+].